Reading from the N-terminus, the 631-residue chain is Plastidic ATP/ADP-transporter (631 aa).

11 helical membrane-spanning segments follow: residues 106-126 (IELV…CILF), 149-169 (IIPF…MLLY), 180-200 (ALFY…GFVL), 238-258 (LFYV…FWGF), 271-290 (FYPL…GRTV), 313-333 (GMMS…WWVN), 369-389 (LATL…TWKS), 407-427 (DFST…QWIF), 442-462 (VLLL…PLAP), 465-485 (AKFG…QNIF), and 543-563 (LASS…AWLG). Residues 586-631 (ERASLKIPVVSQNENGNGPLSSESSLNPAGGDSTNASSEPSSPRSL) are disordered. The span at 595–631 (VSQNENGNGPLSSESSLNPAGGDSTNASSEPSSPRSL) shows a compositional bias: polar residues.

This sequence belongs to the ADP/ATP translocase tlc (TC 2.A.12.2) family.

Its subcellular location is the plastid. It is found in the chloroplast membrane. This Solanum tuberosum (Potato) protein is Plastidic ATP/ADP-transporter.